A 398-amino-acid polypeptide reads, in one-letter code: Putative F-box/kelch-repeat protein At2g29780 (398 aa).

The segment at 1-46 (MAIISETSDDGSHGGVPNKKPEELHKNPKEDDHQEEEVENHPPIPR) is disordered. The span at 19 to 32 (KKPEELHKNPKEDD) shows a compositional bias: basic and acidic residues. One can recognise an F-box domain in the interval 43–90 (PIPRQIPQALIRRTVALIKRCHYPSLSLLSKAFRIVISSPELHQTRSS). Kelch repeat units follow at residues 148-195 (KMYV…VING), 196-241 (KIYV…GFVT), 243-289 (VVMQ…VIED), and 295-342 (DPYC…GGKL).

This chain is Putative F-box/kelch-repeat protein At2g29780, found in Arabidopsis thaliana (Mouse-ear cress).